Reading from the N-terminus, the 211-residue chain is Chaperone protein TorD (211 aa).

The protein belongs to the TorD/DmsD family. TorD subfamily.

The protein resides in the cytoplasm. Functionally, involved in the biogenesis of TorA. Acts on TorA before the insertion of the molybdenum cofactor and, as a result, probably favors a conformation of the apoenzyme that is competent for acquiring the cofactor. This is Chaperone protein TorD from Shewanella loihica (strain ATCC BAA-1088 / PV-4).